The following is a 234-amino-acid chain: tRNA (guanine-N(1)-)-methyltransferase (234 aa).

S-adenosyl-L-methionine-binding positions include Gly112 and 132–137; that span reads IGDFIL.

This sequence belongs to the RNA methyltransferase TrmD family. As to quaternary structure, homodimer.

Its subcellular location is the cytoplasm. The enzyme catalyses guanosine(37) in tRNA + S-adenosyl-L-methionine = N(1)-methylguanosine(37) in tRNA + S-adenosyl-L-homocysteine + H(+). In terms of biological role, specifically methylates guanosine-37 in various tRNAs. This Campylobacter jejuni (strain RM1221) protein is tRNA (guanine-N(1)-)-methyltransferase.